The following is a 318-amino-acid chain: Protein FdhE homolog (318 aa).

This sequence belongs to the FdhE family.

It is found in the cytoplasm. Its function is as follows. Necessary for formate dehydrogenase activity. This chain is Protein FdhE homolog, found in Pseudomonas putida (strain ATCC 47054 / DSM 6125 / CFBP 8728 / NCIMB 11950 / KT2440).